A 250-amino-acid polypeptide reads, in one-letter code: Ubiquinone/menaquinone biosynthesis C-methyltransferase UbiE (250 aa).

S-adenosyl-L-methionine-binding positions include Thr-73, Asp-94, and 122-123; that span reads DA.

It belongs to the class I-like SAM-binding methyltransferase superfamily. MenG/UbiE family.

The catalysed reaction is a 2-demethylmenaquinol + S-adenosyl-L-methionine = a menaquinol + S-adenosyl-L-homocysteine + H(+). It carries out the reaction a 2-methoxy-6-(all-trans-polyprenyl)benzene-1,4-diol + S-adenosyl-L-methionine = a 5-methoxy-2-methyl-3-(all-trans-polyprenyl)benzene-1,4-diol + S-adenosyl-L-homocysteine + H(+). It participates in quinol/quinone metabolism; menaquinone biosynthesis; menaquinol from 1,4-dihydroxy-2-naphthoate: step 2/2. It functions in the pathway cofactor biosynthesis; ubiquinone biosynthesis. Methyltransferase required for the conversion of demethylmenaquinol (DMKH2) to menaquinol (MKH2) and the conversion of 2-polyprenyl-6-methoxy-1,4-benzoquinol (DDMQH2) to 2-polyprenyl-3-methyl-6-methoxy-1,4-benzoquinol (DMQH2). In Coxiella burnetii (strain CbuK_Q154) (Coxiella burnetii (strain Q154)), this protein is Ubiquinone/menaquinone biosynthesis C-methyltransferase UbiE.